The primary structure comprises 431 residues: Histidinol dehydrogenase (431 aa).

3 residues coordinate NAD(+): Tyr127, Gln185, and Asn208. Residues Ser234, Gln256, and His259 each contribute to the substrate site. Positions 256 and 259 each coordinate Zn(2+). Catalysis depends on proton acceptor residues Glu323 and His324. Residues His324, Asp357, Glu411, and His416 each coordinate substrate. Asp357 is a Zn(2+) binding site. His416 is a binding site for Zn(2+).

It belongs to the histidinol dehydrogenase family. Zn(2+) is required as a cofactor.

It catalyses the reaction L-histidinol + 2 NAD(+) + H2O = L-histidine + 2 NADH + 3 H(+). The protein operates within amino-acid biosynthesis; L-histidine biosynthesis; L-histidine from 5-phospho-alpha-D-ribose 1-diphosphate: step 9/9. Catalyzes the sequential NAD-dependent oxidations of L-histidinol to L-histidinaldehyde and then to L-histidine. The sequence is that of Histidinol dehydrogenase from Vibrio vulnificus (strain CMCP6).